The sequence spans 450 residues: BAG family molecular chaperone regulator 5 (450 aa).

5 BAG domains span residues 9-86 (SIKR…EQNA), 95-167 (EAIF…ESCA), 182-260 (SVSK…DLDE), 275-350 (SILK…DLKE), and 365-442 (EHQS…YYLD).

As to quaternary structure, binds to the ATPase domain of HSP/HSC70 chaperones.

Its function is as follows. Co-chaperone for HSP/HSP70 proteins. It functions as a nucleotide-exchange factor promoting the release of ADP from HSP70, thereby activating HSP70-mediated protein refolding. In Gallus gallus (Chicken), this protein is BAG family molecular chaperone regulator 5 (BAG5).